Reading from the N-terminus, the 353-residue chain is N6-methyladenosine RNA demethylase ALKB1 (353 aa).

In terms of domain architecture, Fe2OG dioxygenase spans 223-352; that stretch reads IAQAAIVNFY…RINLNVRQMR (130 aa). H241, D243, and H308 together coordinate Fe cation. R343 contributes to the 2-oxoglutarate binding site.

It belongs to the alkB family. It depends on Fe(2+) as a cofactor.

It localises to the cytoplasm. The protein resides in the P-body. It carries out the reaction an N(6)-methyladenosine in mRNA + 2-oxoglutarate + O2 = an adenosine in mRNA + formaldehyde + succinate + CO2. Its function is as follows. RNA demethylase that regulates the stability of mRNAs through an m(6)A-dependent manner. M6A is a modification present at internal sites of mRNAs and some non-coding RNAs and plays a role in mRNA stability and processing. Plays a role in pathogenicity towards plant host. This Pyricularia oryzae (strain 70-15 / ATCC MYA-4617 / FGSC 8958) (Rice blast fungus) protein is N6-methyladenosine RNA demethylase ALKB1.